The chain runs to 459 residues: Bifunctional protein GlmU (459 aa).

Residues 1–229 (MSNFAIXLAA…FDESLGVNDR (229 aa)) form a pyrophosphorylase region. UDP-N-acetyl-alpha-D-glucosamine is bound by residues 8–11 (LAAG), Lys22, Gln72, and 77–78 (GT). Asp102 is a binding site for Mg(2+). UDP-N-acetyl-alpha-D-glucosamine contacts are provided by Gly139, Glu154, Asn169, and Asn227. Asn227 is a Mg(2+) binding site. Residues 230–250 (VALATAESVMRRRINHKHMVN) are linker. The N-acetyltransferase stretch occupies residues 251 to 459 (GVSFVNPEAT…TRLPHHPKNQ (209 aa)). 2 residues coordinate UDP-N-acetyl-alpha-D-glucosamine: Arg332 and Lys350. The active-site Proton acceptor is the His362. UDP-N-acetyl-alpha-D-glucosamine is bound by residues Tyr365 and Asn376. Residues Ala379, 385–386 (NY), Ser404, Ala422, and Arg439 each bind acetyl-CoA.

This sequence in the N-terminal section; belongs to the N-acetylglucosamine-1-phosphate uridyltransferase family. The protein in the C-terminal section; belongs to the transferase hexapeptide repeat family. As to quaternary structure, homotrimer. Mg(2+) serves as cofactor.

The protein resides in the cytoplasm. The enzyme catalyses alpha-D-glucosamine 1-phosphate + acetyl-CoA = N-acetyl-alpha-D-glucosamine 1-phosphate + CoA + H(+). It carries out the reaction N-acetyl-alpha-D-glucosamine 1-phosphate + UTP + H(+) = UDP-N-acetyl-alpha-D-glucosamine + diphosphate. The protein operates within nucleotide-sugar biosynthesis; UDP-N-acetyl-alpha-D-glucosamine biosynthesis; N-acetyl-alpha-D-glucosamine 1-phosphate from alpha-D-glucosamine 6-phosphate (route II): step 2/2. Its pathway is nucleotide-sugar biosynthesis; UDP-N-acetyl-alpha-D-glucosamine biosynthesis; UDP-N-acetyl-alpha-D-glucosamine from N-acetyl-alpha-D-glucosamine 1-phosphate: step 1/1. It functions in the pathway bacterial outer membrane biogenesis; LPS lipid A biosynthesis. In terms of biological role, catalyzes the last two sequential reactions in the de novo biosynthetic pathway for UDP-N-acetylglucosamine (UDP-GlcNAc). The C-terminal domain catalyzes the transfer of acetyl group from acetyl coenzyme A to glucosamine-1-phosphate (GlcN-1-P) to produce N-acetylglucosamine-1-phosphate (GlcNAc-1-P), which is converted into UDP-GlcNAc by the transfer of uridine 5-monophosphate (from uridine 5-triphosphate), a reaction catalyzed by the N-terminal domain. This chain is Bifunctional protein GlmU, found in Streptococcus pneumoniae serotype 19F (strain G54).